We begin with the raw amino-acid sequence, 359 residues long: Peptide chain release factor 1 (359 aa).

The residue at position 236 (Q236) is an N5-methylglutamine.

It belongs to the prokaryotic/mitochondrial release factor family. In terms of processing, methylated by PrmC. Methylation increases the termination efficiency of RF1.

The protein resides in the cytoplasm. Peptide chain release factor 1 directs the termination of translation in response to the peptide chain termination codons UAG and UAA. The polypeptide is Peptide chain release factor 1 (Streptococcus pyogenes serotype M6 (strain ATCC BAA-946 / MGAS10394)).